The following is a 370-amino-acid chain: MTEKINLLNLSEPELQGFIASQGQPLYRATQLLQWIHQRGVTDFSLMTDLSKPFRQQLSEASFVRVPELALERVSADGTHKWLFRLADNNKIETVFIPDRKRGTLCVSSQVGCALNCSFCATGKEGFNRNLTLAEIIGQVWLAARLLKSPYKITNVVMMGMGEPLLNYEAVVAAMHLMMHDHAYGLSKYRVTLSTSGVIPAMRRLREESPVSLAVSLHAPNDALRNVLIPLNKKYSLDQLIPLCRDYYSRGSKRCVTFEYVMIEGMNDRLIDAKQLIRLLADVPCKINLIPFNSFQGTAYRCSTESAISVFQKCLMDAGFNTRVRRTRGDDIAGACGQLAGQFHDRTGRHQRWVQKQGHDFNRPIPAIDH.

Glutamate 93 functions as the Proton acceptor in the catalytic mechanism. Residues 99 to 331 form the Radical SAM core domain; it reads DRKRGTLCVS…TRVRRTRGDD (233 aa). A disulfide bridge links cysteine 106 with cysteine 336. Cysteine 113, cysteine 117, and cysteine 120 together coordinate [4Fe-4S] cluster. S-adenosyl-L-methionine is bound by residues 162–163, serine 194, 216–218, and asparagine 293; these read GE and SLH. The S-methylcysteine intermediate role is filled by cysteine 336.

This sequence belongs to the radical SAM superfamily. RlmN family. The cofactor is [4Fe-4S] cluster.

Its subcellular location is the cytoplasm. The catalysed reaction is adenosine(2503) in 23S rRNA + 2 reduced [2Fe-2S]-[ferredoxin] + 2 S-adenosyl-L-methionine = 2-methyladenosine(2503) in 23S rRNA + 5'-deoxyadenosine + L-methionine + 2 oxidized [2Fe-2S]-[ferredoxin] + S-adenosyl-L-homocysteine. The enzyme catalyses adenosine(37) in tRNA + 2 reduced [2Fe-2S]-[ferredoxin] + 2 S-adenosyl-L-methionine = 2-methyladenosine(37) in tRNA + 5'-deoxyadenosine + L-methionine + 2 oxidized [2Fe-2S]-[ferredoxin] + S-adenosyl-L-homocysteine. Its function is as follows. Specifically methylates position 2 of adenine 2503 in 23S rRNA and position 2 of adenine 37 in tRNAs. m2A2503 modification seems to play a crucial role in the proofreading step occurring at the peptidyl transferase center and thus would serve to optimize ribosomal fidelity. This is Dual-specificity RNA methyltransferase RlmN from Coxiella burnetii (strain RSA 493 / Nine Mile phase I).